The following is a 194-amino-acid chain: Histone H1.0-A (194 aa).

Disordered stretches follow at residues 1-29 (MTEN…YSDM) and 96-194 (ADEV…GRKK). The H15 domain maps to 22–95 (DHPKYSDMIL…GASGSFRLAK (74 aa)). Composition is skewed to basic residues over residues 102 to 164 (PAKK…KTVR) and 172 to 194 (KAKK…GRKK).

This sequence belongs to the histone H1/H5 family.

It is found in the nucleus. The protein localises to the chromosome. Functionally, histones H1 are necessary for the condensation of nucleosome chains into higher-order structures. The histones H1.0 are found in cells that are in terminal stages of differentiation or that have low rates of cell division. The chain is Histone H1.0-A (h1-0-a) from Xenopus laevis (African clawed frog).